An 89-amino-acid polypeptide reads, in one-letter code: Small ribosomal subunit protein uS15 (89 aa).

The protein belongs to the universal ribosomal protein uS15 family. As to quaternary structure, part of the 30S ribosomal subunit. Forms a bridge to the 50S subunit in the 70S ribosome, contacting the 23S rRNA.

Its function is as follows. One of the primary rRNA binding proteins, it binds directly to 16S rRNA where it helps nucleate assembly of the platform of the 30S subunit by binding and bridging several RNA helices of the 16S rRNA. Forms an intersubunit bridge (bridge B4) with the 23S rRNA of the 50S subunit in the ribosome. In Mycobacterium leprae (strain Br4923), this protein is Small ribosomal subunit protein uS15.